We begin with the raw amino-acid sequence, 75 residues long: Putative antitoxin VapB17 (75 aa).

Putative antitoxin component of a possible type II toxin-antitoxin (TA) system. The cognate toxin is VapC17. The chain is Putative antitoxin VapB17 (vapB17) from Mycobacterium tuberculosis (strain CDC 1551 / Oshkosh).